The following is a 159-amino-acid chain: Ribosomal RNA large subunit methyltransferase H (159 aa).

S-adenosyl-L-methionine contacts are provided by residues Leu-76, Gly-108, and Leu-127 to Phe-132.

This sequence belongs to the RNA methyltransferase RlmH family. Homodimer.

The protein localises to the cytoplasm. The catalysed reaction is pseudouridine(1915) in 23S rRNA + S-adenosyl-L-methionine = N(3)-methylpseudouridine(1915) in 23S rRNA + S-adenosyl-L-homocysteine + H(+). In terms of biological role, specifically methylates the pseudouridine at position 1915 (m3Psi1915) in 23S rRNA. This chain is Ribosomal RNA large subunit methyltransferase H, found in Ureaplasma urealyticum serovar 10 (strain ATCC 33699 / Western).